A 176-amino-acid chain; its full sequence is uncharacterized protein (176 aa).

Residues alanine 87 to serine 100 are compositionally biased toward low complexity. Positions alanine 87 to glycine 109 are disordered.

This is an uncharacterized protein from Homo sapiens (Human).